The chain runs to 89 residues: Small ribosomal subunit protein uS19 (89 aa).

Belongs to the universal ribosomal protein uS19 family.

Its function is as follows. Protein S19 forms a complex with S13 that binds strongly to the 16S ribosomal RNA. In Porphyromonas gingivalis (strain ATCC 33277 / DSM 20709 / CIP 103683 / JCM 12257 / NCTC 11834 / 2561), this protein is Small ribosomal subunit protein uS19.